The following is a 908-amino-acid chain: UPF0182 protein Csac_0864 (908 aa).

Helical transmembrane passes span 22 to 42 (FVIS…DLFL), 62 to 82 (FYVK…VFFV), 98 to 118 (ISLL…ALIA), 166 to 186 (FLFY…IVLY), 208 to 228 (HIFF…KYEM), 253 to 273 (YFRL…YFFI), and 286 to 306 (SYIG…YFVV).

This sequence belongs to the UPF0182 family.

It is found in the cell membrane. The polypeptide is UPF0182 protein Csac_0864 (Caldicellulosiruptor saccharolyticus (strain ATCC 43494 / DSM 8903 / Tp8T 6331)).